Reading from the N-terminus, the 262-residue chain is Lipoate-protein ligase A subunit 1 (262 aa).

In terms of domain architecture, BPL/LPL catalytic spans 30-226 (YGDKPILRFY…GFSETLHIDF (197 aa)). ATP is bound by residues R72, G77, Y80, D85, P132, and K135. Mg(2+)-binding residues include T137 and D138. Residues K145, A149, and A163 each contribute to the ATP site. K145 contributes to the (R)-lipoate binding site. A149 is a binding site for Mg(2+).

This sequence belongs to the LplA family. As to quaternary structure, heterodimer composed of LplA and LplB.

It is found in the cytoplasm. The enzyme catalyses L-lysyl-[lipoyl-carrier protein] + (R)-lipoate + ATP = N(6)-[(R)-lipoyl]-L-lysyl-[lipoyl-carrier protein] + AMP + diphosphate + H(+). The protein operates within protein modification; protein lipoylation via exogenous pathway; protein N(6)-(lipoyl)lysine from lipoate: step 1/2. Its pathway is protein modification; protein lipoylation via exogenous pathway; protein N(6)-(lipoyl)lysine from lipoate: step 2/2. Part of a lipoate-protein ligase complex that catalyzes both the ATP-dependent activation of exogenously supplied lipoate to lipoyl-AMP and the transfer of the activated lipoyl onto the lipoyl domains of lipoate-dependent enzymes. Can also use octanoate as substrate. This Thermoplasma acidophilum (strain ATCC 25905 / DSM 1728 / JCM 9062 / NBRC 15155 / AMRC-C165) protein is Lipoate-protein ligase A subunit 1 (lplA).